A 115-amino-acid chain; its full sequence is UPF0295 protein BPUM_0828 (115 aa).

The next 2 membrane-spanning stretches (helical) occupy residues 13 to 33 (TFAL…VFFK) and 41 to 61 (FFML…FWIG).

This sequence belongs to the UPF0295 family.

The protein resides in the cell membrane. The protein is UPF0295 protein BPUM_0828 of Bacillus pumilus (strain SAFR-032).